The primary structure comprises 368 residues: Quinolinate synthase (368 aa).

Iminosuccinate is bound by residues His46 and Ser63. Cys110 contacts [4Fe-4S] cluster. Iminosuccinate-binding positions include 141–143 and Ser162; that span reads YVN. Residue Cys230 coordinates [4Fe-4S] cluster. Iminosuccinate-binding positions include 256 to 258 and Thr273; that span reads HPE. Residue Cys320 coordinates [4Fe-4S] cluster.

The protein belongs to the quinolinate synthase family. Type 3 subfamily. [4Fe-4S] cluster is required as a cofactor.

Its subcellular location is the cytoplasm. The catalysed reaction is iminosuccinate + dihydroxyacetone phosphate = quinolinate + phosphate + 2 H2O + H(+). It participates in cofactor biosynthesis; NAD(+) biosynthesis; quinolinate from iminoaspartate: step 1/1. Functionally, catalyzes the condensation of iminoaspartate with dihydroxyacetone phosphate to form quinolinate. This is Quinolinate synthase from Bacillus cereus (strain ATCC 14579 / DSM 31 / CCUG 7414 / JCM 2152 / NBRC 15305 / NCIMB 9373 / NCTC 2599 / NRRL B-3711).